The chain runs to 599 residues: Elongation factor 4 (599 aa).

One can recognise a tr-type G domain in the interval 4–186 (SKIRNFSIIA…SIVEKVPAPK (183 aa)). Residues 16-21 (DHGKST) and 133-136 (NKVD) each bind GTP.

It belongs to the TRAFAC class translation factor GTPase superfamily. Classic translation factor GTPase family. LepA subfamily.

The protein localises to the cell inner membrane. It carries out the reaction GTP + H2O = GDP + phosphate + H(+). Functionally, required for accurate and efficient protein synthesis under certain stress conditions. May act as a fidelity factor of the translation reaction, by catalyzing a one-codon backward translocation of tRNAs on improperly translocated ribosomes. Back-translocation proceeds from a post-translocation (POST) complex to a pre-translocation (PRE) complex, thus giving elongation factor G a second chance to translocate the tRNAs correctly. Binds to ribosomes in a GTP-dependent manner. The protein is Elongation factor 4 of Syntrophotalea carbinolica (strain DSM 2380 / NBRC 103641 / GraBd1) (Pelobacter carbinolicus).